Consider the following 343-residue polypeptide: Phenylalanine--tRNA ligase alpha subunit (343 aa).

E256 is a binding site for Mg(2+).

Belongs to the class-II aminoacyl-tRNA synthetase family. Phe-tRNA synthetase alpha subunit type 1 subfamily. In terms of assembly, tetramer of two alpha and two beta subunits. The cofactor is Mg(2+).

It localises to the cytoplasm. It carries out the reaction tRNA(Phe) + L-phenylalanine + ATP = L-phenylalanyl-tRNA(Phe) + AMP + diphosphate + H(+). The chain is Phenylalanine--tRNA ligase alpha subunit from Phytoplasma australiense.